A 1132-amino-acid polypeptide reads, in one-letter code: Error-prone DNA polymerase (1132 aa).

The protein belongs to the DNA polymerase type-C family. DnaE2 subfamily.

It is found in the cytoplasm. It carries out the reaction DNA(n) + a 2'-deoxyribonucleoside 5'-triphosphate = DNA(n+1) + diphosphate. In terms of biological role, DNA polymerase involved in damage-induced mutagenesis and translesion synthesis (TLS). It is not the major replicative DNA polymerase. The protein is Error-prone DNA polymerase of Anaeromyxobacter dehalogenans (strain 2CP-C).